The chain runs to 185 residues: MPRHQSYSLSDEDIIELVFRNYGVKITPEQIARAYAPEQRMSWKKSVEVARFIKGMTLKQAKTWLEDVVKLKRPVPIKTFKKKQAHHATPWEGWPVAKWPVKVARRFLQVLENLENNARFRGLDVDRVVIVHAAAHKGFKIPNIMPRAFGRATRFDEQTVNVELVAVELPKEVLPKRYKLNLVKR.

The protein belongs to the universal ribosomal protein uL22 family. As to quaternary structure, part of the 50S ribosomal subunit.

This protein binds specifically to 23S rRNA. It makes multiple contacts with different domains of the 23S rRNA in the assembled 50S subunit and ribosome. In terms of biological role, the globular domain of the protein is located near the polypeptide exit tunnel on the outside of the subunit, while an extended beta-hairpin is found that lines the wall of the exit tunnel in the center of the 70S ribosome. The sequence is that of Large ribosomal subunit protein uL22 from Pyrobaculum aerophilum (strain ATCC 51768 / DSM 7523 / JCM 9630 / CIP 104966 / NBRC 100827 / IM2).